The chain runs to 105 residues: Large ribosomal subunit protein uL24 (105 aa).

The protein belongs to the universal ribosomal protein uL24 family. Part of the 50S ribosomal subunit.

Its function is as follows. One of two assembly initiator proteins, it binds directly to the 5'-end of the 23S rRNA, where it nucleates assembly of the 50S subunit. One of the proteins that surrounds the polypeptide exit tunnel on the outside of the subunit. This Staphylococcus haemolyticus (strain JCSC1435) protein is Large ribosomal subunit protein uL24.